A 239-amino-acid chain; its full sequence is DNA repair protein RecO (239 aa).

The protein belongs to the RecO family.

Functionally, involved in DNA repair and RecF pathway recombination. The polypeptide is DNA repair protein RecO (Stenotrophomonas maltophilia (strain K279a)).